A 452-amino-acid polypeptide reads, in one-letter code: Elongation factor Tu, mitochondrial (452 aa).

The N-terminal 43 residues, 1–43, are a transit peptide targeting the mitochondrion; the sequence is MAAATLLRATPRFSGLCASPTPFLQGRLRPLKAPASPFLCRGL. Residues 55 to 251 form the tr-type G domain; the sequence is KPHVNVGTIG…AVDTYIPVPT (197 aa). Residues 64-71 form a G1 region; the sequence is GHVDHGKT. GTP is bound by residues Asp67, Gly69, Lys70, Thr71, and Thr72. A Mg(2+)-binding site is contributed by Thr71. At Lys79 the chain carries N6-acetyllysine. An N6-acetyllysine; alternate modification is found at Lys88. Residue Lys88 is modified to N6-succinyllysine; alternate. Positions 105–109 are G2; it reads GITIN. The segment at 126-129 is G3; that stretch reads DCPG. The GTP site is built by Asn181, Asp184, Ser219, Ala220, and Leu221. The interval 181–184 is G4; the sequence is NKAD. Residues 219–221 are G5; that stretch reads SAL. The residue at position 234 (Lys234) is an N6-succinyllysine. An N6-acetyllysine modification is found at Lys256. Thr278 is modified (phosphothreonine). The residue at position 286 (Lys286) is an N6-succinyllysine. The residue at position 312 (Ser312) is a Phosphoserine. 2 positions are modified to N6-acetyllysine: Lys361 and Lys418.

It belongs to the TRAFAC class translation factor GTPase superfamily. Classic translation factor GTPase family. EF-Tu/EF-1A subfamily. As to quaternary structure, interacts with NLRX1. Interacts with ATG16L1.

It is found in the mitochondrion. The enzyme catalyses GTP + H2O = GDP + phosphate + H(+). In terms of biological role, GTP hydrolase that promotes the GTP-dependent binding of aminoacyl-tRNA to the A-site of ribosomes during protein biosynthesis. Plays a role in the regulation of autophagy and innate immunity. Recruits ATG5-ATG12 and NLRX1 at mitochondria and serves as a checkpoint of the RIGI-MAVS pathway. In turn, inhibits RLR-mediated type I interferon while promoting autophagy. This is Elongation factor Tu, mitochondrial from Rattus norvegicus (Rat).